A 145-amino-acid chain; its full sequence is Deoxyuridine 5'-triphosphate nucleotidohydrolase (145 aa).

Residues 65–67 (RSG), N78, 82–84 (TID), and K92 each bind substrate.

This sequence belongs to the dUTPase family. It depends on Mg(2+) as a cofactor.

The enzyme catalyses dUTP + H2O = dUMP + diphosphate + H(+). It participates in pyrimidine metabolism; dUMP biosynthesis; dUMP from dCTP (dUTP route): step 2/2. Functionally, this enzyme is involved in nucleotide metabolism: it produces dUMP, the immediate precursor of thymidine nucleotides and it decreases the intracellular concentration of dUTP so that uracil cannot be incorporated into DNA. In Syntrophomonas wolfei subsp. wolfei (strain DSM 2245B / Goettingen), this protein is Deoxyuridine 5'-triphosphate nucleotidohydrolase.